A 1383-amino-acid chain; its full sequence is MAQTLAMTSQFNGRKRVRKFFGKIPEVTEMPNLIEVQKASYDQFLMIEEPKGGRPDEGLQAVFKSVFPISDFSGTAMLEFVGYEFDLPKFDVEECRQRDLTYAAPLKVILRLIVFDVDEDTGSKDIKDIKEQGVYMGDMPLMTTNGTFIVNGTERVIVSQMHRSPGVFFDHDKGKSHSSGKFLFAARVIPYRGSWLDIEFDAKDIIYARIDRRRKIPITSLLMALGMDASDILSTFYNKVTYERDGDGWRIPYSVGRFKGVKLISDLVDADSGEVVAEAGKKLTVRAAKALAEKGLKAVKITEDDLLGSYLAEDIVNYQTGEIYLEAGDEIDEKALKILFDVSADQINILDIDHMNIGAYIRNTLKVDKNESQQDALFDIYRVMRPGEPPTMDTAAAMFHSLFFDPERYDLSAVGRVKMNLRMDLDCPDTVRILRQEDILAVVKMLVELRDGRGEIDDIDNLGNRRVRSVGELMENQYRIGLLRMERAIKERMSSVEIDTVMPQDLINAKPAAAAVREFFGSSQLSQFMDQTNPLSEITHKRRLSALGPGGLTRERAGFEVRDVHPTHYGRICPIETPEGPNIGLINSLATFARVNKYGFIESPYRKIIDGKVTTEVIYLSAMEESKHYVAQANSSLDAEGRFTDEFVVCRHAGEVLMAPRDHVDLMDVSPKQLVSVAAALIPFLENDDANRALMGSNMQRQAVPLVRAEAPFVGTGMESIVARDSGAAVSAKRGGIVDQVDATRIVIRATEDLDPSKSGVDIYRLQKFQRSNQSTCINQRPLVHVGDRVEKGNIIADGPSTDLGDLALGRNVLVAFMPWNGYNYEDSILLSERIVADDVFTSIHIEEFEVAARDTKLGPEEITRDIPNVAEESLRNLDEAGIIYIGAEVQPGDILVGKITPKGESPMTPEEKLLRAIFGEKASDVRDTSMRMPPGAFGTVVEVRVFNRHGVEKDERAMAIEREEIERLAKDRDDEQSILDRNVYARLTDMLTGKIAVEGPKGFSKGKKLDNTIMGHYPRSQWWQFTVEDEKLQSEIEALRRQYDESKEALQRRFMDKVEKVQRGDEMPPGVMKMVKVFVAVKRKIQPGDKMAGRHGNKGVVSRILPIEDMPFLEDGTHADIVLNPLGVPSRMNVGQILETHLGWACAGMGKKIGDLVDLYQETGDIFPLRQRIENLMPDNDHNEPVRQYDNESLYKLALQMRKGVSIATPVFDGAHEADINMMLEDADLDSSGQVVLYDGRTGEPFDRPVTVGYIYMLKLHHLVDDKIHARSIGPYSLVTQQPLGGKAQFGGQRFGEMEVWALEAYGAAYTLQEMLTVKSDDVAGRTKVYEAIVRGDDTFEAGIPESFNVLVKEMRSLALNVELDDARELIAQRVLSDTTEQ.

This sequence belongs to the RNA polymerase beta chain family. As to quaternary structure, the RNAP catalytic core consists of 2 alpha, 1 beta, 1 beta' and 1 omega subunit. When a sigma factor is associated with the core the holoenzyme is formed, which can initiate transcription.

It carries out the reaction RNA(n) + a ribonucleoside 5'-triphosphate = RNA(n+1) + diphosphate. In terms of biological role, DNA-dependent RNA polymerase catalyzes the transcription of DNA into RNA using the four ribonucleoside triphosphates as substrates. In Bartonella quintana (strain Toulouse) (Rochalimaea quintana), this protein is DNA-directed RNA polymerase subunit beta.